The following is a 439-amino-acid chain: Serine hydroxymethyltransferase (439 aa).

(6S)-5,6,7,8-tetrahydrofolate-binding positions include L134 and 138-140 (GHL). Residue K243 is modified to N6-(pyridoxal phosphate)lysine.

It belongs to the SHMT family. Homodimer. Pyridoxal 5'-phosphate is required as a cofactor.

It is found in the cytoplasm. It carries out the reaction (6R)-5,10-methylene-5,6,7,8-tetrahydrofolate + glycine + H2O = (6S)-5,6,7,8-tetrahydrofolate + L-serine. It participates in one-carbon metabolism; tetrahydrofolate interconversion. Its pathway is amino-acid biosynthesis; glycine biosynthesis; glycine from L-serine: step 1/1. Its function is as follows. Catalyzes the reversible interconversion of serine and glycine with tetrahydrofolate (THF) serving as the one-carbon carrier. This reaction serves as the major source of one-carbon groups required for the biosynthesis of purines, thymidylate, methionine, and other important biomolecules. Also exhibits THF-independent aldolase activity toward beta-hydroxyamino acids, producing glycine and aldehydes, via a retro-aldol mechanism. This chain is Serine hydroxymethyltransferase, found in Brucella anthropi (strain ATCC 49188 / DSM 6882 / CCUG 24695 / JCM 21032 / LMG 3331 / NBRC 15819 / NCTC 12168 / Alc 37) (Ochrobactrum anthropi).